Reading from the N-terminus, the 1241-residue chain is Putative urea carboxylase (1241 aa).

One can recognise a Biotin carboxylation domain in the interval 3–459; sequence ALKTLLIANR…LTKFLNNFEY (457 aa). Residues Lys-117 and Glu-201 each contribute to the ATP site. Residues 121–321 form the ATP-grasp domain; sequence RELATKAGVP…LVELMLRQAD (201 aa). One can recognise a Biotinyl-binding domain in the interval 1159-1239; sequence EELLKDPEIT…EAGKPLMLVR (81 aa). Lys-1202 bears the N6-biotinyllysine mark.

Biotin is required as a cofactor.

The catalysed reaction is urea + hydrogencarbonate + ATP = urea-1-carboxylate + ADP + phosphate + H(+). Functionally, involved in the utilization of lactams. Required for the conversion of exogenous 2-pyrrolidinone (gamma-butyrolactam) to endogenous gamma-amino-n-butyrate (GABA). The sequence is that of Putative urea carboxylase (lamA) from Emericella nidulans (strain FGSC A4 / ATCC 38163 / CBS 112.46 / NRRL 194 / M139) (Aspergillus nidulans).